The following is a 346-amino-acid chain: Hexosaminidase D (346 aa).

E141 (proton donor) is an active-site residue.

The protein belongs to the glycosyl hydrolase 20 family. Homodimer; disulfide-linked.

Its subcellular location is the cytoplasm. It localises to the nucleus. The protein localises to the extracellular vesicle. The catalysed reaction is Hydrolysis of terminal non-reducing N-acetyl-D-hexosamine residues in N-acetyl-beta-D-hexosaminides.. With respect to regulation, inhibited by O-(2-acetamido-2-deoxy-D-glucopyranosylidene)amino N-phenylcarbamate (PUGNAc). Inhibited by galacto-NAG-thiazoline. Its function is as follows. Has hexosaminidase activity. Responsible for the cleavage of the monosaccharides N-acetylglucosamine (GlcNAc) and N-acetylgalactosamine (GalNAc) from cellular substrates. Has a preference for galactosaminide over glucosaminide substrates. This Bos taurus (Bovine) protein is Hexosaminidase D.